The sequence spans 231 residues: Orotidine 5'-phosphate decarboxylase (231 aa).

Substrate contacts are provided by residues Asp-11, Lys-33, 60–69 (DLKFHDIPNT), Thr-120, Arg-181, Gln-190, Gly-210, and Arg-211. The active-site Proton donor is the Lys-62.

The protein belongs to the OMP decarboxylase family. Type 1 subfamily. As to quaternary structure, homodimer.

It catalyses the reaction orotidine 5'-phosphate + H(+) = UMP + CO2. Its pathway is pyrimidine metabolism; UMP biosynthesis via de novo pathway; UMP from orotate: step 2/2. In terms of biological role, catalyzes the decarboxylation of orotidine 5'-monophosphate (OMP) to uridine 5'-monophosphate (UMP). The polypeptide is Orotidine 5'-phosphate decarboxylase (Pseudoalteromonas atlantica (strain T6c / ATCC BAA-1087)).